A 204-amino-acid polypeptide reads, in one-letter code: Ribosomal RNA small subunit methyltransferase G (204 aa).

S-adenosyl-L-methionine contacts are provided by G73, F78, and R139.

It belongs to the methyltransferase superfamily. RNA methyltransferase RsmG family.

The protein resides in the cytoplasm. The catalysed reaction is guanosine(527) in 16S rRNA + S-adenosyl-L-methionine = N(7)-methylguanosine(527) in 16S rRNA + S-adenosyl-L-homocysteine. Specifically methylates the N7 position of guanine in position 527 of 16S rRNA. This chain is Ribosomal RNA small subunit methyltransferase G, found in Coxiella burnetii (strain Dugway 5J108-111).